A 264-amino-acid polypeptide reads, in one-letter code: Small ribosomal subunit protein eS1 (264 aa).

At Lys34 the chain carries N6-acetyllysine; alternate. Residue Lys34 forms a Glycyl lysine isopeptide (Lys-Gly) (interchain with G-Cter in SUMO2); alternate linkage. Lys56 carries the post-translational modification N6-acetyllysine. Residue Tyr155 is modified to ADP-ribosyltyrosine. Residues 232–264 (HGEGSSSGKATGDETGAKVERADGYEPPVQESV) form a disordered region. Phosphoserine occurs at positions 236 and 237. Positions 242–255 (TGDETGAKVERADG) are enriched in basic and acidic residues. Lys249 carries the N6-acetyllysine; alternate modification. Lys249 is covalently cross-linked (Glycyl lysine isopeptide (Lys-Gly) (interchain with G-Cter in SUMO2); alternate). Tyr256 carries the post-translational modification Phosphotyrosine. Position 263 is a phosphoserine (Ser263).

The protein belongs to the eukaryotic ribosomal protein eS1 family. Component of the small ribosomal subunit. Mature ribosomes consist of a small (40S) and a large (60S) subunit. The 40S subunit contains about 33 different proteins and 1 molecule of RNA (18S). The 60S subunit contains about 49 different proteins and 3 molecules of RNA (28S, 5.8S and 5S). Identified in a IGF2BP1-dependent mRNP granule complex containing untranslated mRNAs. Binds with high affinity to IPO4. Interacts with DDIT3. Part of the small subunit (SSU) processome, composed of more than 70 proteins and the RNA chaperone small nucleolar RNA (snoRNA) U3. Post-translationally, ADP-ribosylated at Tyr-155 by PARP1 in presence of HPF1.

It localises to the cytoplasm. It is found in the nucleus. Its subcellular location is the nucleolus. Component of the small ribosomal subunit. The ribosome is a large ribonucleoprotein complex responsible for the synthesis of proteins in the cell. Part of the small subunit (SSU) processome, first precursor of the small eukaryotic ribosomal subunit. During the assembly of the SSU processome in the nucleolus, many ribosome biogenesis factors, an RNA chaperone and ribosomal proteins associate with the nascent pre-rRNA and work in concert to generate RNA folding, modifications, rearrangements and cleavage as well as targeted degradation of pre-ribosomal RNA by the RNA exosome. May play a role during erythropoiesis through regulation of transcription factor DDIT3. The sequence is that of Small ribosomal subunit protein eS1 from Bos taurus (Bovine).